The primary structure comprises 385 residues: MNHLRAEGPASVLAIGTANPENILIQDEFPDYYFRVTKSEHMTQLKEKFRKICDKSMIRKRNCFLNEEHLKQNPRLVEHEMQTLDARQDMLVVEVPKLGKDACAKAIKEWGQPKSKITHLIFTSASTTDMPGADYHCAKLLGLSPSVKRVMMYQLGCYGGGTVLRIAKDIAENNKGARVLAVCCDIMACLFRGPSDSDLELLVGQAIFGDGAAAVIVGAEPDESVGERPIFELVSTGQTILPNSEGTIGGHIREAGLIFDLHKDVPMLISNNIEKCLIEAFTPIGISDWNSIFWITHPGGKAILDKVEEKLHLKSDKFVDSRHVLSEHGNMSSSTVLFVMDELRKRSLEEGKSTTGDGFEWGVLFGFGPGLTVERVVVRSVPIKY.

Cys-157 is a catalytic residue.

The protein belongs to the thiolase-like superfamily. Chalcone/stilbene synthases family. In terms of tissue distribution, expressed in male and female flowers, and seedlings.

Its subcellular location is the cytoplasm. Functionally, polyketide synthase responsible for the biosynthesis of secondary metabolites. In Cannabis sativa (Hemp), this protein is Polyketide synthase 3 (PKSF3).